The chain runs to 342 residues: MRVISRARSACTWTSCTSLSPCSTSCPPSPAAPTLLRRRSLPQQRRRPSSSPNRRVRGVTTSPCPTRSLVYKRRVGAPQRLCAETVATMQAQEANALLLSRMEALEWFKKFTVWLRVYAIFIFQLAFSFGLGSVFWLGFPQNRNFCVENYSFFLTVLVPIVCMFITYTLGNEHPSNATVLFIYLLANSLTAAIFQMCSESRVLVGSYVMTLALFISFTGLAFLGGRDRRRWKCISCVYVVMLLSFLTLALLSDADWLQKIVVTLCAFSISFFLGILAYDSLMVIFFCPPNQCIRHAVCLYLDSMAIFLTLLLMLSGPRWISLSDGVPLDNGTLTAASTTGKS.

The segment at 21-64 (PCSTSCPPSPAAPTLLRRRSLPQQRRRPSSSPNRRVRGVTTSPC) is disordered. Positions 36–48 (LRRRSLPQQRRRP) are enriched in basic residues. A helical membrane pass occupies residues 119-139 (AIFIFQLAFSFGLGSVFWLGF). The N-linked (GlcNAc...) asparagine; by host glycan is linked to N149. The chain crosses the membrane as a helical span at residues 150–170 (YSFFLTVLVPIVCMFITYTLG). A glycan (N-linked (GlcNAc...) asparagine; by host) is linked at N176. 5 consecutive transmembrane segments (helical) span residues 177–197 (ATVLFIYLLANSLTAAIFQMC), 202–222 (VLVGSYVMTLALFISFTGLAF), 231–251 (WKCISCVYVVMLLSFLTLALL), 266–286 (AFSISFFLGILAYDSLMVIFF), and 296–316 (AVCLYLDSMAIFLTLLLMLSG). The N-linked (GlcNAc...) asparagine; by host glycan is linked to N330.

It belongs to the cytomegalovirus US12 family.

The protein localises to the membrane. The protein is Transmembrane protein HWLF3 (US20) of Human cytomegalovirus (strain Towne) (HHV-5).